Consider the following 212-residue polypeptide: Small ribosomal subunit protein uS19m (212 aa).

A mitochondrion-targeting transit peptide spans 1–29 (MAFCTKLGGHWKQGVNVPVSSMLGSLRYM). Residues 31 to 109 (TKLYIGGLSP…FNISVNVAKD (79 aa)) enclose the RRM domain.

This sequence belongs to the universal ribosomal protein uS19 family. In terms of assembly, component of the mitochondrial ribosome small subunit.

It localises to the mitochondrion. Its function is as follows. The RNA-binding domain found in RPS19 may functionally replace the missing mitochondrial RPS13. The polypeptide is Small ribosomal subunit protein uS19m (RPS19) (Arabidopsis thaliana (Mouse-ear cress)).